A 447-amino-acid chain; its full sequence is Na(+)-translocating NADH-quinone reductase subunit A (447 aa).

The protein belongs to the NqrA family. In terms of assembly, composed of six subunits; NqrA, NqrB, NqrC, NqrD, NqrE and NqrF.

The enzyme catalyses a ubiquinone + n Na(+)(in) + NADH + H(+) = a ubiquinol + n Na(+)(out) + NAD(+). Its function is as follows. NQR complex catalyzes the reduction of ubiquinone-1 to ubiquinol by two successive reactions, coupled with the transport of Na(+) ions from the cytoplasm to the periplasm. NqrA to NqrE are probably involved in the second step, the conversion of ubisemiquinone to ubiquinol. The sequence is that of Na(+)-translocating NADH-quinone reductase subunit A from Haemophilus influenzae (strain 86-028NP).